The primary structure comprises 167 residues: Ureidoglycolate lyase (167 aa).

This sequence belongs to the ureidoglycolate lyase family. In terms of assembly, homodimer. Ni(2+) serves as cofactor.

The enzyme catalyses (S)-ureidoglycolate = urea + glyoxylate. Its pathway is nitrogen metabolism; (S)-allantoin degradation. In terms of biological role, catalyzes the catabolism of the allantoin degradation intermediate (S)-ureidoglycolate, generating urea and glyoxylate. Involved in the utilization of allantoin as nitrogen source. The polypeptide is Ureidoglycolate lyase (Pseudomonas fluorescens (strain ATCC BAA-477 / NRRL B-23932 / Pf-5)).